Consider the following 255-residue polypeptide: Ribosomal RNA small subunit methyltransferase G 2 (255 aa).

The S-adenosyl-L-methionine site is built by G90, F95, and R155. The span at 233–245 shows a compositional bias: acidic residues; that stretch reads EDEGEELLMDELS. The segment at 233–255 is disordered; sequence EDEGEELLMDELSNEEKRRWAKY. A compositionally biased stretch (basic and acidic residues) spans 246–255; that stretch reads NEEKRRWAKY.

It belongs to the methyltransferase superfamily. RNA methyltransferase RsmG family.

The protein resides in the cytoplasm. The enzyme catalyses guanosine(527) in 16S rRNA + S-adenosyl-L-methionine = N(7)-methylguanosine(527) in 16S rRNA + S-adenosyl-L-homocysteine. In terms of biological role, specifically methylates the N7 position of guanine in position 527 of 16S rRNA. This is Ribosomal RNA small subunit methyltransferase G 2 from Bdellovibrio bacteriovorus (strain ATCC 15356 / DSM 50701 / NCIMB 9529 / HD100).